Consider the following 423-residue polypeptide: Serine hydroxymethyltransferase 2 (423 aa).

(6S)-5,6,7,8-tetrahydrofolate is bound by residues Leu121 and 125-127; that span reads GHL. Lys230 carries the post-translational modification N6-(pyridoxal phosphate)lysine. 356 to 358 lines the (6S)-5,6,7,8-tetrahydrofolate pocket; that stretch reads SPF.

This sequence belongs to the SHMT family. In terms of assembly, homodimer. Requires pyridoxal 5'-phosphate as cofactor.

It localises to the cytoplasm. It catalyses the reaction (6R)-5,10-methylene-5,6,7,8-tetrahydrofolate + glycine + H2O = (6S)-5,6,7,8-tetrahydrofolate + L-serine. It functions in the pathway one-carbon metabolism; tetrahydrofolate interconversion. Its pathway is amino-acid biosynthesis; glycine biosynthesis; glycine from L-serine: step 1/1. In terms of biological role, catalyzes the reversible interconversion of serine and glycine with tetrahydrofolate (THF) serving as the one-carbon carrier. This reaction serves as the major source of one-carbon groups required for the biosynthesis of purines, thymidylate, methionine, and other important biomolecules. Also exhibits THF-independent aldolase activity toward beta-hydroxyamino acids, producing glycine and aldehydes, via a retro-aldol mechanism. This Pectobacterium atrosepticum (strain SCRI 1043 / ATCC BAA-672) (Erwinia carotovora subsp. atroseptica) protein is Serine hydroxymethyltransferase 2.